Reading from the N-terminus, the 242-residue chain is uncharacterized protein (242 aa).

Positions 17–85 (QRVDERIATT…HGSGSVVRDP (69 aa)) constitute an HTH gntR-type domain. The segment at residues 45 to 64 (ERDLAERLGVNRTSLRQGLA) is a DNA-binding region (H-T-H motif).

This is an uncharacterized protein from Mycobacterium tuberculosis (strain ATCC 25618 / H37Rv).